Here is a 643-residue protein sequence, read N- to C-terminus: MTMNETSAIPARQRENQFFEIGVVGRKTGFTVPRDVKKGDDGFEDMDAYFLSDGSIHLDEDNGDIEQDMPPVTRLQPTSPMAVNAASDEASHASSSDSSDKNPDIPSSPLLMNSRALRASRGSSGPLIVPIDHSAFQAEDEGTADKTKVDGNKLSIQPRKANRIVDFSRIKASPDRKKFEPRRSTELPSKIPSSTPKDDNVQESPAFPDENITALQKNVANFTSIKDSGGRDNLYIQTISKPRRSYVQNNKSEQTIKPSKQNKQKEEKKTISQGNKPNSRDEDSELSIDVPLSMLNRSLANNSQKNKKRTPNKPLQESSINSVKEGESNPVVKRKRGRPRKNKLEIGNSVQTSEATQVKGAKKPAIRNAKKMSNEKDDSLNSQSDSASGEFIKTIARNNLQEIKQVEREDTLVGVRRSKRTRIAPLAFWKNERVVYELHRDENRIPALPEVKQIIRVDDPSPSIRQGRKKRHAKRSGVEIKSNLEAKSNDVEEYDAFYKDEINCEVLSWNEQNPKASEERVVGYSLPSVNLQQISNQQLKFASLFKEEPSFAAGVVEMPAGAEKPVKPSKHNIMSFCILQGKIEVTVNATTFRMKKDGVFIVPRGNYYSIKNIGKEAVRLYYTHATDTLENKRRGIGDFPNER.

2 disordered regions span residues 55 to 209 (SIHL…AFPD) and 224 to 386 (SIKD…QSDS). 2 stretches are compositionally biased toward low complexity: residues 85–97 (AASDEASHASSSD) and 104–125 (DIPSSPLLMNSRALRASRGSSG). Positions 166–185 (DFSRIKASPDRKKFEPRRST) are enriched in basic and acidic residues. Polar residues-rich tracts occupy residues 235 to 261 (YIQTISKPRRSYVQNNKSEQTIKPSKQ), 295 to 304 (LNRSLANNSQ), and 313 to 322 (KPLQESSINS). Basic residues-rich tracts occupy residues 332–341 (VKRKRGRPRK) and 360–370 (GAKKPAIRNAK). Positions 333-345 (KRKRGRPRKNKLE) form a DNA-binding region, a.T hook.

It belongs to the CENP-C/MIF2 family. As to quaternary structure, component of the inner kinetochore constitutive centromere-associated network (CCAN) (also known as central kinetochore Sim4 complex in fission yeast), which is composed of at least cnl2, cnp3, cnp20, fta1, fta2, fta3, fta4, fta6, fta7, mal2, mhf1, mhf2, mis6, mis15, mis17, sim4 and wip1.

It localises to the nucleus. It is found in the nucleoplasm. Component of the kinetochore, a multiprotein complex that assembles on centromeric DNA and attaches chromosomes to spindle microtubules, mediating chromosome segregation and sister chromatid segregation during meiosis and mitosis. Component of the inner kinetochore constitutive centromere-associated network (CCAN), which serves as a structural platform for outer kinetochore assembly. This is Inner kinetochore subunit cnp3 (cnp3) from Schizosaccharomyces pombe (strain 972 / ATCC 24843) (Fission yeast).